The primary structure comprises 64 residues: Large ribosomal subunit protein bL32 (64 aa).

The segment at 1–23 (MAVQKSRVTPSRRGQRRSHDALA) is disordered.

It belongs to the bacterial ribosomal protein bL32 family.

The sequence is that of Large ribosomal subunit protein bL32 from Xylella fastidiosa (strain M23).